A 674-amino-acid chain; its full sequence is Electrogenic aspartate/glutamate antiporter SLC25A13, mitochondrial (674 aa).

N-acetylalanine is present on alanine 2. Positions 2–295 (AAAKVALTKR…TLADIERIAP (294 aa)) are regulatory N-terminal domain. At 2–331 (AAAKVALTKR…LLQVAESAYR (330 aa)) the chain is on the mitochondrial intermembrane side. 4 consecutive EF-hand domains span residues 51–86 (SQPNPKTVELLSGVADQTKDGLISFQEFVAFESVLC), 87–122 (APDALFMVAFQLFDKAGKGEVTFEDVKQVFGQTTIH), 123–157 (QHIPFNWDSEFVQLHFGKERKRHLTYAEFTQFLLE), and 158–193 (IQLEHAKQAFVQRDNASTGRVTAIDFRDIMVTIRPH). The Ca(2+) site is built by aspartate 66, threonine 68, aspartate 70, leucine 72, and glutamate 77. A linker loop domain region spans residues 296–311 (LEEGTLPFNLAEAQRQ). The segment at 321 to 611 (VLLQVAESAY…LQRWFYIDFG (291 aa)) is carrier domain. 3 Solcar repeats span residues 326 to 418 (AESA…VRDK), 426 to 510 (VPLA…ARAS), and 518 to 605 (VSPG…LQRW). A helical membrane pass occupies residues 332–349 (FGLGSVAGAVGATAVYPI). Topologically, residues 350–392 (DLVKTRMQNQRSTGSFVGELMYKNSFDCFKKVLRYEGFFGLYR) are mitochondrial matrix. Lysine 353 and lysine 372 each carry N6-acetyllysine. The helical transmembrane segment at 393–412 (GLLPQLLGVAPEKAIKLTVN) threads the bilayer. Residues 413–435 (DFVRDKFMHKDGSVPLAAEILAG) are Mitochondrial intermembrane-facing. A helical membrane pass occupies residues 436–449 (GCAGGSQVIFTNPL). Over 450-484 (EIVKIRLQVAGEITTGPRVSALSVVRDLGFFGIYK) the chain is Mitochondrial matrix. Lysine 453 carries the post-translational modification N6-methyllysine. At lysine 484 the chain carries N6-acetyllysine; alternate. N6-succinyllysine; alternate is present on lysine 484. A helical transmembrane segment spans residues 485–504 (GAKACFLRDIPFSAIYFPCY). The Mitochondrial intermembrane portion of the chain corresponds to 505-523 (AHARASFANEDGQVSPGSL). A helical transmembrane segment spans residues 524–541 (LLAGAIAGMPAASLVTPA). Topologically, residues 542–580 (DVIKTRLQVAARAGQTTYSGVIDCFKKILREEGPKALWK) are mitochondrial matrix. Position 580 is an N6-succinyllysine (lysine 580). The chain crosses the membrane as a helical span at residues 581–599 (GAARVFRSSPQFGVTLLTY). Residues 600–674 (ELLQRWFYID…PTSEAIGGGP (75 aa)) lie on the Mitochondrial intermembrane side of the membrane. The C-terminal domain stretch occupies residues 612–674 (GVKPMGSEPV…PTSEAIGGGP (63 aa)). N6-acetyllysine is present on lysine 661.

This sequence belongs to the mitochondrial carrier (TC 2.A.29) family. Homodimer (via N-terminus).

It localises to the mitochondrion inner membrane. The catalysed reaction is L-aspartate(in) + L-glutamate(out) + H(+)(out) = L-aspartate(out) + L-glutamate(in) + H(+)(in). The enzyme catalyses 3-sulfino-L-alanine(out) + L-glutamate(in) + H(+)(in) = 3-sulfino-L-alanine(in) + L-glutamate(out) + H(+)(out). It catalyses the reaction 3-sulfino-L-alanine(out) + L-aspartate(in) = 3-sulfino-L-alanine(in) + L-aspartate(out). Mitochondrial electrogenic aspartate/glutamate antiporter that favors efflux of aspartate and entry of glutamate and proton within the mitochondria as part of the malate-aspartate shuttle. Also mediates the uptake of L-cysteinesulfinate (3-sulfino-L-alanine) by mitochondria in exchange of L-glutamate and proton. Can also exchange L-cysteinesulfinate with aspartate in their anionic form without any proton translocation. Lacks transport activity towards gamma-aminobutyric acid (GABA). The protein is Electrogenic aspartate/glutamate antiporter SLC25A13, mitochondrial of Macaca fascicularis (Crab-eating macaque).